Here is a 214-residue protein sequence, read N- to C-terminus: Nicotinamidase (214 aa).

The active-site Proton acceptor is aspartate 18. 4 residues coordinate a divalent metal cation: aspartate 56, histidine 58, histidine 62, and histidine 91. Lysine 116 is an active-site residue. Cysteine 161 functions as the Nucleophile in the catalytic mechanism.

The protein belongs to the isochorismatase family. Requires a divalent metal cation as cofactor.

The catalysed reaction is nicotinamide + H2O = nicotinate + NH4(+). It participates in cofactor biosynthesis; nicotinate biosynthesis; nicotinate from nicotinamide: step 1/1. In terms of biological role, catalyzes the deamidation of nicotinamide (NAM) into nicotinate (Na). Functions in the deamidating salvage pathway for production of NAD from nicotinamide. In Acinetobacter baylyi (strain ATCC 33305 / BD413 / ADP1), this protein is Nicotinamidase.